A 411-amino-acid polypeptide reads, in one-letter code: Serine hydroxymethyltransferase (411 aa).

(6S)-5,6,7,8-tetrahydrofolate contacts are provided by residues L117 and 121 to 123; that span reads GHL. Residue K226 is modified to N6-(pyridoxal phosphate)lysine.

The protein belongs to the SHMT family. As to quaternary structure, homodimer. Pyridoxal 5'-phosphate serves as cofactor.

The protein localises to the cytoplasm. The catalysed reaction is (6R)-5,10-methylene-5,6,7,8-tetrahydrofolate + glycine + H2O = (6S)-5,6,7,8-tetrahydrofolate + L-serine. It participates in one-carbon metabolism; tetrahydrofolate interconversion. Its pathway is amino-acid biosynthesis; glycine biosynthesis; glycine from L-serine: step 1/1. Functionally, catalyzes the reversible interconversion of serine and glycine with tetrahydrofolate (THF) serving as the one-carbon carrier. This reaction serves as the major source of one-carbon groups required for the biosynthesis of purines, thymidylate, methionine, and other important biomolecules. Also exhibits THF-independent aldolase activity toward beta-hydroxyamino acids, producing glycine and aldehydes, via a retro-aldol mechanism. This chain is Serine hydroxymethyltransferase, found in Syntrophobacter fumaroxidans (strain DSM 10017 / MPOB).